Here is a 974-residue protein sequence, read N- to C-terminus: Hexokinase-1 (974 aa).

Residues 1–42 (MGWGAPLLSRMLHGPGQAGETSPVPERQSGSENPASEDRRPL) form a disordered region. Residues 57-66 (CQRGQAVDVE) form a mitochondrial-binding peptide (MBP) region. 2 consecutive Hexokinase domains span residues 72 to 514 (PLTE…MVTA) and 520 to 962 (AEQH…LITA). ATP is bound by residues Arg86 and 140-145 (DLGGSS). Positions 129–263 (DGSEKGDFIA…DYDANIVAVV (135 aa)) are hexokinase small subdomain 1. 140 to 147 (DLGGSSFR) provides a ligand contact to D-glucose 6-phosphate. Residues Ser211, 228 to 229 (TK), and 264 to 265 (ND) contribute to the D-glucose site. The interval 264–503 (NDTVGTMMTC…SDVRFLLSES (240 aa)) is hexokinase large subdomain 1. D-glucose 6-phosphate contacts are provided by Asp265 and Thr288. D-glucose contacts are provided by residues Asn291, Glu316, and 347 to 350 (QLFE). The residue at position 393 (Ser393) is a Phosphoserine. A D-glucose 6-phosphate-binding site is contributed by 469-471 (DGS). 481-482 (RR) serves as a coordination point for ATP. Residues Ser505 and 588–592 (DLGGT) contribute to the D-glucose 6-phosphate site. The segment at 577-711 (DGTEHGDFLA…EFDLDVVAVV (135 aa)) is hexokinase small subdomain 2. An ATP-binding site is contributed by 588 to 593 (DLGGTN). D-glucose-binding positions include 659-660 (SF), 676-677 (TK), and 712-713 (ND). The segment at 712 to 951 (NDTVGTMMTC…CTVSFLLSED (240 aa)) is hexokinase large subdomain 2. Positions 713 and 736 each coordinate D-glucose 6-phosphate. An ATP-binding site is contributed by Thr736. Residues 738–739 (SN), Glu764, and Glu798 contribute to the D-glucose site. ATP-binding positions include 803 to 804 (GM), 840 to 844 (TKFLS), and 919 to 923 (TLYKL). Residues 917–919 (DGT) and Ser953 each bind D-glucose 6-phosphate.

Belongs to the hexokinase family. In terms of assembly, monomer. Interacts with RABL2/RABL2A; binds preferentially to GTP-bound RABL2. Interacts with VDAC1. The HK1-VDAC1 complex interacts with ATF2. Interacts (via N-terminal spermatogenic cell-specific region) with PFKM isoform 2 and isoform 3 (via C-terminus). Interacts with SMAD5. In terms of processing, tyrosine-phosphorylated. In terms of tissue distribution, in rapidly growing tumor cells exhibiting high glucose catabolic rates, isoform HK1 is markedly elevated. Isoform HK1-SA, isoform HK1-SB and isoform HK1-SC are found only in spermatogenic cells. Isoform HK1-SC is detected in round spermatids, condensing spermatids and mature sperm where it is found in the head membranes, mitochondria of the midpiece and the fibrous sheath of the flagellum. Expressed within the principal piece and midpiece of sperm tail (at protein level).

It localises to the mitochondrion outer membrane. The protein localises to the cytoplasm. The protein resides in the cytosol. It is found in the membrane. The catalysed reaction is a D-hexose + ATP = a D-hexose 6-phosphate + ADP + H(+). The enzyme catalyses D-fructose + ATP = D-fructose 6-phosphate + ADP + H(+). It catalyses the reaction D-glucose + ATP = D-glucose 6-phosphate + ADP + H(+). It carries out the reaction D-mannose + ATP = D-mannose 6-phosphate + ADP + H(+). The catalysed reaction is D-glucosamine + ATP = D-glucosamine 6-phosphate + ADP + H(+). It functions in the pathway carbohydrate metabolism; hexose metabolism. Its pathway is carbohydrate degradation; glycolysis; D-glyceraldehyde 3-phosphate and glycerone phosphate from D-glucose: step 1/4. Its activity is regulated as follows. Hexokinase is an allosteric enzyme inhibited by its product D-glucose 6-phosphate. Hexokinase activity is inhibited by N-acetyl-D-glucosamine. Its function is as follows. Catalyzes the phosphorylation of various hexoses, such as D-glucose, D-glucosamine, D-fructose, D-mannose and 2-deoxy-D-glucose, to hexose 6-phosphate (D-glucose 6-phosphate, D-glucosamine 6-phosphate, D-fructose 6-phosphate, D-mannose 6-phosphate and 2-deoxy-D-glucose 6-phosphate, respectively). Does not phosphorylate N-acetyl-D-glucosamine. Mediates the initial step of glycolysis by catalyzing phosphorylation of D-glucose to D-glucose 6-phosphate. Involved in innate immunity and inflammation by acting as a pattern recognition receptor for bacterial peptidoglycan. When released in the cytosol, N-acetyl-D-glucosamine component of bacterial peptidoglycan inhibits the hexokinase activity of HK1 and causes its dissociation from mitochondrial outer membrane, thereby activating the NLRP3 inflammasome. The sequence is that of Hexokinase-1 from Mus musculus (Mouse).